The following is a 179-amino-acid chain: ATP synthase subunit delta (179 aa).

The protein belongs to the ATPase delta chain family. In terms of assembly, F-type ATPases have 2 components, F(1) - the catalytic core - and F(0) - the membrane proton channel. F(1) has five subunits: alpha(3), beta(3), gamma(1), delta(1), epsilon(1). F(0) has three main subunits: a(1), b(2) and c(10-14). The alpha and beta chains form an alternating ring which encloses part of the gamma chain. F(1) is attached to F(0) by a central stalk formed by the gamma and epsilon chains, while a peripheral stalk is formed by the delta and b chains.

The protein localises to the cell membrane. Functionally, f(1)F(0) ATP synthase produces ATP from ADP in the presence of a proton or sodium gradient. F-type ATPases consist of two structural domains, F(1) containing the extramembraneous catalytic core and F(0) containing the membrane proton channel, linked together by a central stalk and a peripheral stalk. During catalysis, ATP synthesis in the catalytic domain of F(1) is coupled via a rotary mechanism of the central stalk subunits to proton translocation. This protein is part of the stalk that links CF(0) to CF(1). It either transmits conformational changes from CF(0) to CF(1) or is implicated in proton conduction. In Listeria monocytogenes serotype 4b (strain CLIP80459), this protein is ATP synthase subunit delta.